A 589-amino-acid chain; its full sequence is PAN2-PAN3 deadenylation complex subunit pan3 (589 aa).

Residues 1 to 32 form a disordered region; sequence MSVRKNSPASPKPTSRSRESSRSPSVTDLKDH. The segment at 34-63 adopts a C3H1-type zinc-finger fold; it reads KAKRTLCRNILLYGSCKHSENGCAFRHDGP. Positions 74–94 match the PABPC-interacting motif-2 (PAM-2) motif; sequence YSVKKKLNAASASFQPVRALP. Residues 201–457 are pseudokinase domain; sequence EASRQTISAL…NLELFLQNHI (257 aa). ATP-binding positions include K255 and 302-309; that span reads DFYPCTTT. A coiled-coil region spans residues 458-496; that stretch reads ESFFPIMSSPYVECEKMERKISDAFQHGRFFNILCKIMF. Residues 497 to 589 are knob domain; it reads IIDNNRASRE…DNVYEMEINS (93 aa).

The protein belongs to the protein kinase superfamily. PAN3 family. As to quaternary structure, homodimer. Forms a heterotrimer with a catalytic subunit pan2 to form the poly(A)-nuclease (PAN) deadenylation complex. Interacts (via PAM-2 motif) with poly(A)-binding protein pab1 (via PABC domain), conferring substrate specificity of the enzyme complex.

It is found in the cytoplasm. The protein localises to the nucleus. Functionally, regulatory subunit of the poly(A)-nuclease (PAN) deadenylation complex, one of two cytoplasmic mRNA deadenylases involved in mRNA turnover. PAN specifically shortens poly(A) tails of RNA and the activity is stimulated by poly(A)-binding protein pab1. PAN deadenylation is followed by rapid degradation of the shortened mRNA tails by the CCR4-NOT complex. Deadenylated mRNAs are then degraded by two alternative mechanisms, namely exosome-mediated 3'-5' exonucleolytic degradation, or deadenylation-dependent mRNA decaping and subsequent 5'-3' exonucleolytic degradation by xrn1. May also be involved in post-transcriptional maturation of mRNA poly(A) tails. ppk26/pan3 acts as a positive regulator for PAN activity, recruiting the catalytic subunit pan2 to mRNA via its interaction with RNA and with pab1. This chain is PAN2-PAN3 deadenylation complex subunit pan3 (ppk26), found in Schizosaccharomyces pombe (strain 972 / ATCC 24843) (Fission yeast).